The following is a 459-amino-acid chain: Serine--tRNA ligase (459 aa).

254–256 (TAE) serves as a coordination point for L-serine. ATP is bound by residues 285–287 (RKE) and V301. E308 is an L-serine binding site. Residue 372-375 (EMVS) coordinates ATP. T408 provides a ligand contact to L-serine.

The protein belongs to the class-II aminoacyl-tRNA synthetase family. Type-1 seryl-tRNA synthetase subfamily. Homodimer. The tRNA molecule binds across the dimer.

Its subcellular location is the cytoplasm. The enzyme catalyses tRNA(Ser) + L-serine + ATP = L-seryl-tRNA(Ser) + AMP + diphosphate + H(+). It carries out the reaction tRNA(Sec) + L-serine + ATP = L-seryl-tRNA(Sec) + AMP + diphosphate + H(+). Its pathway is aminoacyl-tRNA biosynthesis; selenocysteinyl-tRNA(Sec) biosynthesis; L-seryl-tRNA(Sec) from L-serine and tRNA(Sec): step 1/1. In terms of biological role, catalyzes the attachment of serine to tRNA(Ser). Is also able to aminoacylate tRNA(Sec) with serine, to form the misacylated tRNA L-seryl-tRNA(Sec), which will be further converted into selenocysteinyl-tRNA(Sec). This Desulfurococcus amylolyticus (strain DSM 18924 / JCM 16383 / VKM B-2413 / 1221n) (Desulfurococcus kamchatkensis) protein is Serine--tRNA ligase.